A 167-amino-acid chain; its full sequence is Ubiquitin-fold modifier-conjugating enzyme 1 (167 aa).

The active-site Glycyl thioester intermediate is the Cys116.

The protein belongs to the ubiquitin-conjugating enzyme family. UFC1 subfamily. As to quaternary structure, interacts with UBA5 (via C-terminus). Interacts with UFL1. Interacts with UFM1.

Its function is as follows. E2-like enzyme which specifically catalyzes the second step in ufmylation. Accepts the ubiquitin-like modifier UFM1 from the E1 enzyme UBA5 and forms an intermediate with UFM1 via a thioester linkage. Ufmylation is involved in various processes, such as ribosome recycling, response to DNA damage, interferon response or reticulophagy (also called ER-phagy). In Esox lucius (Northern pike), this protein is Ubiquitin-fold modifier-conjugating enzyme 1.